The primary structure comprises 508 residues: Gasdermin-C (508 aa).

The tract at residues 1–257 is triggers pyroptosis; the sequence is MPSMLERISK…VGYCAARSEG (257 aa).

This sequence belongs to the gasdermin family. As to quaternary structure, homooligomer; homooligomeric ring-shaped pore complex containing 27-28 subunits when inserted in the membrane. Cleavage by CASP8 relieves autoinhibition by releasing the N-terminal moiety (Gasdermin-C, N-terminal) that initiates pyroptosis. The cleavage site is unclear. According to a publication, it takes place after Asp-240 in response to alpha-ketoglutarate. Another paper reports cleavage by CASP8 after Asp-365. In terms of processing, palmitoylated. Expressed mainly in trachea and spleen. In the esophagus, expressed in differentiating cells and probably in differentiated cells. Also detected in gastric epithelium.

The protein resides in the cytoplasm. The protein localises to the cytosol. Its subcellular location is the cell membrane. The full-length protein before cleavage is inactive: intramolecular interactions between N- and C-terminal domains mediate autoinhibition in the absence of activation signal. The intrinsic pyroptosis-inducing activity is carried by the released N-terminal moiety (Gasdermin-C, N-terminal) following cleavage by caspase CASP8. In terms of biological role, this form constitutes the precursor of the pore-forming protein: upon cleavage, the released N-terminal moiety (Gasdermin-C, N-terminal) binds to membranes and forms pores, triggering pyroptosis. Functionally, pore-forming protein that causes membrane permeabilization and pyroptosis. Produced by the cleavage of gasdermin-C by caspase CASP8 in response to death signals. After cleavage, moves to the plasma membrane where it strongly binds to membrane inner leaflet lipids. Homooligomerizes within the membrane and forms pores of 10-15 nanometers (nm) of inner diameter, triggering pyroptosis. This is Gasdermin-C from Homo sapiens (Human).